Here is a 137-residue protein sequence, read N- to C-terminus: uncharacterized protein (137 aa).

The protein belongs to the ycf72 family.

The protein localises to the plastid. It localises to the chloroplast. This is an uncharacterized protein from Saccharum hybrid (Sugarcane).